Reading from the N-terminus, the 197-residue chain is Imidazoleglycerol-phosphate dehydratase (197 aa).

It belongs to the imidazoleglycerol-phosphate dehydratase family.

It is found in the cytoplasm. The enzyme catalyses D-erythro-1-(imidazol-4-yl)glycerol 3-phosphate = 3-(imidazol-4-yl)-2-oxopropyl phosphate + H2O. It participates in amino-acid biosynthesis; L-histidine biosynthesis; L-histidine from 5-phospho-alpha-D-ribose 1-diphosphate: step 6/9. The polypeptide is Imidazoleglycerol-phosphate dehydratase (Stutzerimonas stutzeri (strain A1501) (Pseudomonas stutzeri)).